Reading from the N-terminus, the 276-residue chain is MQSKFLWIAAASAATAAAQVPARLCGTAQPTMDDLVIAAGLAAEGKDNRRGLHPEDPIVVPTLFHVLAINETVAGGYLTEKSLQDQLDVMNADFGPSNVIFNLTATTRTVNRRWAQDLDEIPMRRALRQGGQETLNIYFMPYVSGYLGYCTFPNFWDAGSDEFIYDGCAVLSDSLPGGSLARYNLGRTATHEIGHWFDLFHTFSGGCGCVGDMIHDTPAMLNATGGCPVGKDTCPDRPGLDPIHNYMDYSDDACMNEFTPGQNFRMRSAWYNIRTK.

An N-terminal signal peptide occupies residues 1–17 (MQSKFLWIAAASAATAA). N-linked (GlcNAc...) asparagine glycosylation is found at N70 and N102. Zn(2+) is bound at residue H191. The active site involves E192. Residue H195 coordinates Zn(2+). N222 carries N-linked (GlcNAc...) asparagine glycosylation. A disulfide bridge connects residues C227 and C254.

Belongs to the peptidase M43B family.

It localises to the secreted. In terms of biological role, secreted metalloproteinase that allows assimilation of proteinaceous substrates. The sequence is that of Extracellular metalloprotease VDBG_07883 from Verticillium alfalfae (strain VaMs.102 / ATCC MYA-4576 / FGSC 10136) (Verticillium wilt of alfalfa).